The sequence spans 173 residues: Translation initiation factor IF-3 (173 aa).

Belongs to the IF-3 family. As to quaternary structure, monomer.

It localises to the cytoplasm. Its function is as follows. IF-3 binds to the 30S ribosomal subunit and shifts the equilibrium between 70S ribosomes and their 50S and 30S subunits in favor of the free subunits, thus enhancing the availability of 30S subunits on which protein synthesis initiation begins. This chain is Translation initiation factor IF-3, found in Campylobacter lari (strain RM2100 / D67 / ATCC BAA-1060).